We begin with the raw amino-acid sequence, 144 residues long: MELNNLKPAEGAKHAKRRVGRGIGSGLGKTAGRGHKGQKSRSGGFHKVGFEGGQMPLQRRLPKRGFTSLTKEFVGEVRLGDLEKLPVDEIDLLALKQAGLVGELIKSAKIIATGELKRKIVVKGLGATKGARAAIEAAGGSFAE.

The segment at 1-56 (MELNNLKPAEGAKHAKRRVGRGIGSGLGKTAGRGHKGQKSRSGGFHKVGFEGGQMP) is disordered. Over residues 21–31 (RGIGSGLGKTA) the composition is skewed to gly residues.

It belongs to the universal ribosomal protein uL15 family. As to quaternary structure, part of the 50S ribosomal subunit.

In terms of biological role, binds to the 23S rRNA. In Burkholderia mallei (strain NCTC 10247), this protein is Large ribosomal subunit protein uL15.